The chain runs to 390 residues: Putative methylesterase 11, chloroplastic (390 aa).

The N-terminal 46 residues, 1–46 (MGNLCSLFTPPKPVKKRKPITKRQSSIGASSSGSGLNSNRWNNRVR), are a transit peptide targeting the chloroplast. Disordered regions lie at residues 1 to 52 (MGNL…SSRR) and 94 to 119 (QGSC…DPLL). Over residues 25–48 (SSIGASSSGSGLNSNRWNNRVRSS) the composition is skewed to low complexity. The span at 94-104 (QGSCSKKNQLP) shows a compositional bias: polar residues. The segment covering 105-114 (RSSSSRSRSS) has biased composition (low complexity). Positions 137 to 241 (NHFVLVHGGS…KAVFLAAAML (105 aa)) constitute an AB hydrolase-1 domain. The Acyl-ester intermediate role is filled by Asp-213. Residues Asp-339 and His-367 each act as charge relay system in the active site.

This sequence belongs to the AB hydrolase superfamily. Methylesterase family.

Its subcellular location is the plastid. It localises to the chloroplast. In terms of biological role, putative methylesterase. This Arabidopsis thaliana (Mouse-ear cress) protein is Putative methylesterase 11, chloroplastic.